The primary structure comprises 394 residues: S-adenosylmethionine synthase (394 aa).

His16 provides a ligand contact to ATP. A Mg(2+)-binding site is contributed by Asp18. Position 44 (Glu44) interacts with K(+). Residues Glu57 and Gln99 each contribute to the L-methionine site. Positions 99–109 are flexible loop; sequence QSPDIAQGVDE. Residues 173 to 175, 240 to 241, Asp249, 255 to 256, Ala272, and Lys276 contribute to the ATP site; these read DAK, RF, and RK. An L-methionine-binding site is contributed by Asp249. Residue Lys280 coordinates L-methionine.

It belongs to the AdoMet synthase family. In terms of assembly, homotetramer; dimer of dimers. The cofactor is Mg(2+). It depends on K(+) as a cofactor.

Its subcellular location is the cytoplasm. The catalysed reaction is L-methionine + ATP + H2O = S-adenosyl-L-methionine + phosphate + diphosphate. It functions in the pathway amino-acid biosynthesis; S-adenosyl-L-methionine biosynthesis; S-adenosyl-L-methionine from L-methionine: step 1/1. Functionally, catalyzes the formation of S-adenosylmethionine (AdoMet) from methionine and ATP. The overall synthetic reaction is composed of two sequential steps, AdoMet formation and the subsequent tripolyphosphate hydrolysis which occurs prior to release of AdoMet from the enzyme. This chain is S-adenosylmethionine synthase, found in Lacticaseibacillus paracasei (strain ATCC 334 / BCRC 17002 / CCUG 31169 / CIP 107868 / KCTC 3260 / NRRL B-441) (Lactobacillus paracasei).